Here is a 223-residue protein sequence, read N- to C-terminus: Ribose-5-phosphate isomerase A (223 aa).

Substrate-binding positions include T32 to T35, D85 to D88, and K98 to G101. E107 (proton acceptor) is an active-site residue. Residue K125 participates in substrate binding.

The protein belongs to the ribose 5-phosphate isomerase family. As to quaternary structure, homodimer.

It catalyses the reaction aldehydo-D-ribose 5-phosphate = D-ribulose 5-phosphate. The protein operates within carbohydrate degradation; pentose phosphate pathway; D-ribose 5-phosphate from D-ribulose 5-phosphate (non-oxidative stage): step 1/1. Functionally, catalyzes the reversible conversion of ribose-5-phosphate to ribulose 5-phosphate. This Pseudomonas fluorescens (strain ATCC BAA-477 / NRRL B-23932 / Pf-5) protein is Ribose-5-phosphate isomerase A.